An 84-amino-acid chain; its full sequence is Small ribosomal subunit protein bS16 (84 aa).

The protein belongs to the bacterial ribosomal protein bS16 family.

This Koribacter versatilis (strain Ellin345) protein is Small ribosomal subunit protein bS16.